A 382-amino-acid polypeptide reads, in one-letter code: Methylthioribose-1-phosphate isomerase (382 aa).

D261 acts as the Proton donor in catalysis.

Belongs to the eIF-2B alpha/beta/delta subunits family. MtnA subfamily.

Its subcellular location is the cytoplasm. The protein localises to the nucleus. The catalysed reaction is 5-(methylsulfanyl)-alpha-D-ribose 1-phosphate = 5-(methylsulfanyl)-D-ribulose 1-phosphate. The protein operates within amino-acid biosynthesis; L-methionine biosynthesis via salvage pathway; L-methionine from S-methyl-5-thio-alpha-D-ribose 1-phosphate: step 1/6. Functionally, catalyzes the interconversion of methylthioribose-1-phosphate (MTR-1-P) into methylthioribulose-1-phosphate (MTRu-1-P). The protein is Methylthioribose-1-phosphate isomerase of Ricinus communis (Castor bean).